The primary structure comprises 390 residues: Lipid-A-disaccharide synthase (390 aa).

Belongs to the LpxB family.

The catalysed reaction is a lipid X + a UDP-2-N,3-O-bis[(3R)-3-hydroxyacyl]-alpha-D-glucosamine = a lipid A disaccharide + UDP + H(+). The protein operates within bacterial outer membrane biogenesis; LPS lipid A biosynthesis. Functionally, condensation of UDP-2,3-diacylglucosamine and 2,3-diacylglucosamine-1-phosphate to form lipid A disaccharide, a precursor of lipid A, a phosphorylated glycolipid that anchors the lipopolysaccharide to the outer membrane of the cell. The chain is Lipid-A-disaccharide synthase (lpxB) from Haemophilus influenzae (strain ATCC 51907 / DSM 11121 / KW20 / Rd).